The following is a 156-amino-acid chain: dCTP deaminase (156 aa).

DCTP is bound by residues 79-84 (RSTFAR), aspartate 95, glutamine 124, and tyrosine 138.

It belongs to the dCTP deaminase family. Homotrimer.

The catalysed reaction is dCTP + H2O + H(+) = dUTP + NH4(+). It functions in the pathway pyrimidine metabolism; dUMP biosynthesis; dUMP from dCTP (dUTP route): step 1/2. Catalyzes the deamination of dCTP to dUTP. In Thermococcus sibiricus (strain DSM 12597 / MM 739), this protein is dCTP deaminase.